The primary structure comprises 187 residues: Elongation factor P (187 aa).

The residue at position 34 (Lys-34) is an N6-(3,6-diaminohexanoyl)-5-hydroxylysine.

The protein belongs to the elongation factor P family. May be beta-lysylated on the epsilon-amino group of Lys-34 by the combined action of EpmA and EpmB, and then hydroxylated on the C5 position of the same residue by EpmC (if this protein is present). Lysylation is critical for the stimulatory effect of EF-P on peptide-bond formation. The lysylation moiety may extend toward the peptidyltransferase center and stabilize the terminal 3-CCA end of the tRNA. Hydroxylation of the C5 position on Lys-34 may allow additional potential stabilizing hydrogen-bond interactions with the P-tRNA.

Its subcellular location is the cytoplasm. It functions in the pathway protein biosynthesis; polypeptide chain elongation. Its function is as follows. Involved in peptide bond synthesis. Alleviates ribosome stalling that occurs when 3 or more consecutive Pro residues or the sequence PPG is present in a protein, possibly by augmenting the peptidyl transferase activity of the ribosome. Modification of Lys-34 is required for alleviation. This Thioalkalivibrio sulfidiphilus (strain HL-EbGR7) protein is Elongation factor P.